Consider the following 231-residue polypeptide: 2-amino-5-formylamino-6-ribosylaminopyrimidin-4(3H)-one 5'-monophosphate deformylase (231 aa).

E29, H31, D40, and H110 together coordinate Fe cation.

It belongs to the creatininase superfamily. FAPy deformylase family. As to quaternary structure, homodimer. It depends on Fe(2+) as a cofactor. Zn(2+) serves as cofactor.

It carries out the reaction 2-amino-5-formylamino-6-(5-phospho-D-ribosylamino)pyrimidin-4(3H)-one + H2O = 2,5-diamino-6-(1-D-ribosylamino)pyrimidin-4(3H)-one 5'-phosphate + formate + H(+). The protein operates within cofactor biosynthesis; coenzyme F420 biosynthesis. Its pathway is cofactor biosynthesis; riboflavin biosynthesis. Catalyzes the hydrolysis of the formamide of 2-amino-5-formylamino-6-ribosylamino-4(3H)-pyrimidinone 5'-monophosphate (FAPy) to form 2,5-diamino-6-ribosylamino-4(3H)-pyrimidinone 5'-phosphate (APy). The protein is 2-amino-5-formylamino-6-ribosylaminopyrimidin-4(3H)-one 5'-monophosphate deformylase of Methanothermobacter marburgensis (strain ATCC BAA-927 / DSM 2133 / JCM 14651 / NBRC 100331 / OCM 82 / Marburg) (Methanobacterium thermoautotrophicum).